Reading from the N-terminus, the 665-residue chain is PR5-like receptor kinase (665 aa).

Residues 1–24 form the signal peptide; the sequence is MVEGFSLSLMFLLVSHFFVSGVMS. Over 25–276 the chain is Extracellular; that stretch reads RNFTIENKCD…TKQKSSWKLK (252 aa). N-linked (GlcNAc...) asparagine glycosylation is found at asparagine 26 and asparagine 88. 8 cysteine pairs are disulfide-bonded: cysteine 33–cysteine 249, cysteine 81–cysteine 91, cysteine 96–cysteine 103, cysteine 153–cysteine 238, cysteine 158–cysteine 221, cysteine 166–cysteine 184, cysteine 188–cysteine 197, and cysteine 198–cysteine 208. N-linked (GlcNAc...) asparagine glycosylation occurs at asparagine 163. Asparagine 233 carries an N-linked (GlcNAc...) asparagine glycan. A helical transmembrane segment spans residues 277-297; that stretch reads LIVGVSAALTLMILIVVVIIV. The Cytoplasmic portion of the chain corresponds to 298-665; it reads RTKNMRNSEW…DVLQHGSRSS (368 aa). In terms of domain architecture, Protein kinase spans 331–620; that stretch reads NSFAHVLGKG…ALQVPPNPLL (290 aa). ATP is bound by residues 337 to 345 and lysine 360; that span reads LGKGGFGTV. The active-site Proton acceptor is aspartate 455.

This sequence in the N-terminal section; belongs to the thaumatin family. In the C-terminal section; belongs to the protein kinase superfamily. Ser/Thr protein kinase family. Post-translationally, autophosphorylated in vitro. In terms of tissue distribution, expressed in roots. Expressed at low levels in stems.

It localises to the membrane. The enzyme catalyses L-seryl-[protein] + ATP = O-phospho-L-seryl-[protein] + ADP + H(+). The catalysed reaction is L-threonyl-[protein] + ATP = O-phospho-L-threonyl-[protein] + ADP + H(+). Its function is as follows. Possesses kinase activity in vitro. The sequence is that of PR5-like receptor kinase from Arabidopsis thaliana (Mouse-ear cress).